The primary structure comprises 220 residues: Charged multivesicular body protein 2a (220 aa).

Positions 12-53 (EEMLRQNQRALNRAMRDLDRERQRLEQQEKKIIADIKKMAKQ) form a coiled coil. The tract at residues 184–220 (ATGGSLSVAAGKKAEPQPTLADADADLEERLNNLRRD) is disordered. An MIT-interacting motif motif is present at residues 208–218 (ADLEERLNNLR). Over residues 211 to 220 (EERLNNLRRD) the composition is skewed to basic and acidic residues.

The protein belongs to the SNF7 family. Probable core component of the endosomal sorting required for transport complex III (ESCRT-III). ESCRT-III components are thought to multimerize to form a flat lattice on the perimeter membrane of the endosome.

Its subcellular location is the late endosome membrane. It is found in the cytoplasm. Functionally, probable core component of the endosomal sorting required for transport complex III (ESCRT-III) which is involved in multivesicular bodies (MVBs) formation and sorting of endosomal cargo proteins into MVBs. MVBs contain intraluminal vesicles (ILVs) that are generated by invagination and scission from the limiting membrane of the endosome and mostly are delivered to lysosomes enabling degradation of membrane proteins, such as stimulated growth factor receptors, lysosomal enzymes and lipids. The protein is Charged multivesicular body protein 2a (chmp2a) of Danio rerio (Zebrafish).